The primary structure comprises 100 residues: MNKLYWLTDLQLFASKKGVDSSKNGRDSNPKYLGAKLGDGQSTKAGQIIYRQRGNKIYPGLNVGQGKDHTLFAKTAGVVKYTKFMGDKTKVSVLPKEDNK.

Positions 1-13 (MNKLYWLTDLQLF) are excised as a propeptide. The span at 18 to 29 (GVDSSKNGRDSN) shows a compositional bias: basic and acidic residues. Residues 18–39 (GVDSSKNGRDSNPKYLGAKLGD) are disordered.

Belongs to the bacterial ribosomal protein bL27 family. In terms of processing, the N-terminus is cleaved by ribosomal processing cysteine protease Prp.

In Ureaplasma urealyticum serovar 10 (strain ATCC 33699 / Western), this protein is Large ribosomal subunit protein bL27.